The primary structure comprises 393 residues: DNA-directed RNA polymerase subunit Rpo1C (393 aa).

It belongs to the RNA polymerase beta' chain family. As to quaternary structure, part of the 13-subunit RNA polymerase complex. Interacts with TFS4.

The protein resides in the cytoplasm. It carries out the reaction RNA(n) + a ribonucleoside 5'-triphosphate = RNA(n+1) + diphosphate. Functionally, DNA-dependent RNA polymerase (RNAP) catalyzes the transcription of DNA into RNA using the four ribonucleoside triphosphates as substrates. Forms part of the jaw domain. Its function is as follows. Reconstitution experiments show this subunit is required for basic activity. This is DNA-directed RNA polymerase subunit Rpo1C from Sulfolobus acidocaldarius (strain ATCC 33909 / DSM 639 / JCM 8929 / NBRC 15157 / NCIMB 11770).